The chain runs to 537 residues: CTP synthase (537 aa).

Positions 1–265 (MVHFIFVTGG…DNKVLKFFNI (265 aa)) are amidoligase domain. Ser13 contacts CTP. Ser13 contacts UTP. Residues 14–19 (SLGKGL) and Asp71 contribute to the ATP site. The Mg(2+) site is built by Asp71 and Glu139. CTP-binding positions include 146–148 (DIE) and Lys222. Lys222 lines the UTP pocket. The region spanning 290–536 (RIAIIAKYHK…IKAAIEYNKC (247 aa)) is the Glutamine amidotransferase type-1 domain. Position 352 (Gly352) interacts with L-glutamine. The Nucleophile; for glutamine hydrolysis role is filled by Cys379. Residues 380 to 383 (FGMQ), Glu403, and Arg464 each bind L-glutamine. Residues His509 and Glu511 contribute to the active site.

It belongs to the CTP synthase family. In terms of assembly, homotetramer.

It catalyses the reaction UTP + L-glutamine + ATP + H2O = CTP + L-glutamate + ADP + phosphate + 2 H(+). The catalysed reaction is L-glutamine + H2O = L-glutamate + NH4(+). The enzyme catalyses UTP + NH4(+) + ATP = CTP + ADP + phosphate + 2 H(+). Its pathway is pyrimidine metabolism; CTP biosynthesis via de novo pathway; CTP from UDP: step 2/2. Allosterically activated by GTP, when glutamine is the substrate; GTP has no effect on the reaction when ammonia is the substrate. The allosteric effector GTP functions by stabilizing the protein conformation that binds the tetrahedral intermediate(s) formed during glutamine hydrolysis. Inhibited by the product CTP, via allosteric rather than competitive inhibition. Functionally, catalyzes the ATP-dependent amination of UTP to CTP with either L-glutamine or ammonia as the source of nitrogen. Regulates intracellular CTP levels through interactions with the four ribonucleotide triphosphates. In Rickettsia rickettsii (strain Iowa), this protein is CTP synthase.